A 199-amino-acid polypeptide reads, in one-letter code: MAKVLVLYYSSYGHLEVMAKAIAEGAREAGASVDIKRVPETVPLEIAKGAHFKLDQDAPVAKVEDLADYDAIIVGAPTRFGRMASQMAAFFDAAGGLWARGALHGKVAGAFTSTATQHGGQETTLFSIITNMLHFGTTIVGLDYGHAGQMTLDEITGGSPYGATTIAGGDGSRQPSENELTGARYQGRKIAETAIKLHG.

Positions 4 to 190 (VLVLYYSSYG…TGARYQGRKI (187 aa)) constitute a Flavodoxin-like domain. Residues 10–15 (SSYGHL) and 78–80 (TRF) each bind FMN. Residue Y12 coordinates NAD(+). A substrate-binding site is contributed by W98. FMN is bound by residues 113–119 (STATQHG) and H134.

This sequence belongs to the WrbA family. It depends on FMN as a cofactor.

The enzyme catalyses a quinone + NADH + H(+) = a quinol + NAD(+). It catalyses the reaction a quinone + NADPH + H(+) = a quinol + NADP(+). This Caulobacter vibrioides (strain ATCC 19089 / CIP 103742 / CB 15) (Caulobacter crescentus) protein is NAD(P)H dehydrogenase (quinone).